The following is a 408-amino-acid chain: Protein trichome birefringence-like 14 (408 aa).

Residues 11–31 form a helical; Signal-anchor for type II membrane protein membrane-spanning segment; sequence GSVSLALIVLILLVIILLVSE. The short motif at 131 to 133 is the GDS motif element; that stretch reads GDS. Residues 387-401 carry the DCXHWCLPGXXDXWN motif motif; sequence DCLHWCLPGIPDTWN.

It belongs to the PC-esterase family. TBL subfamily.

The protein localises to the membrane. In terms of biological role, may act as a bridging protein that binds pectin and other cell wall polysaccharides. Probably involved in maintaining esterification of pectins. May be involved in the specific O-acetylation of cell wall polymers. The polypeptide is Protein trichome birefringence-like 14 (TBL14) (Arabidopsis thaliana (Mouse-ear cress)).